The chain runs to 380 residues: Phospho-N-acetylmuramoyl-pentapeptide-transferase (380 aa).

Helical transmembrane passes span 25 to 45 (RAAA…PAII), 70 to 90 (TTPT…VLLW), 98 to 118 (VLLA…DDYL), 142 to 162 (VLCG…TLPG), 173 to 193 (VLVV…VTFI), 209 to 229 (GLSS…AYVL), 245 to 265 (GAGE…GFLW), 272 to 294 (QVFM…AILL), and 357 to 377 (QVVV…LSTL).

It belongs to the glycosyltransferase 4 family. MraY subfamily. The cofactor is Mg(2+).

It is found in the cell inner membrane. It carries out the reaction UDP-N-acetyl-alpha-D-muramoyl-L-alanyl-gamma-D-glutamyl-meso-2,6-diaminopimeloyl-D-alanyl-D-alanine + di-trans,octa-cis-undecaprenyl phosphate = di-trans,octa-cis-undecaprenyl diphospho-N-acetyl-alpha-D-muramoyl-L-alanyl-D-glutamyl-meso-2,6-diaminopimeloyl-D-alanyl-D-alanine + UMP. It functions in the pathway cell wall biogenesis; peptidoglycan biosynthesis. Functionally, catalyzes the initial step of the lipid cycle reactions in the biosynthesis of the cell wall peptidoglycan: transfers peptidoglycan precursor phospho-MurNAc-pentapeptide from UDP-MurNAc-pentapeptide onto the lipid carrier undecaprenyl phosphate, yielding undecaprenyl-pyrophosphoryl-MurNAc-pentapeptide, known as lipid I. The protein is Phospho-N-acetylmuramoyl-pentapeptide-transferase of Gemmatimonas aurantiaca (strain DSM 14586 / JCM 11422 / NBRC 100505 / T-27).